A 779-amino-acid chain; its full sequence is GATOR2 complex protein WDR24 (779 aa).

WD repeat units follow at residues serine 66–glutamine 106, glutamate 112–threonine 152, glycine 155–arginine 195, alanine 199–isoleucine 239, glutamine 243–alanine 285, and glutamate 289–alanine 332. 2 disordered regions span residues leucine 506–alanine 526 and aspartate 570–serine 590. The segment at asparagine 707–alanine 729 adopts a C4-type zinc-finger fold. Zn(2+) is bound by residues cysteine 708, cysteine 711, cysteine 722, cysteine 725, cysteine 732, cysteine 735, cysteine 746, cysteine 749, histidine 751, histidine 754, histidine 757, cysteine 768, cysteine 772, histidine 774, and cysteine 776. The RING-type; atypical zinc finger occupies serine 730–threonine 779.

Belongs to the WD repeat WDR24 family. Component of the GATOR2 subcomplex, composed of MIOS, SEC13, SEH1L, WDR24 and WDR59. The GATOR2 complex interacts with CASTOR1 and CASTOR2; the interaction is negatively regulated by arginine. The GATOR2 complex interacts with SESN1, SESN2 and SESN3; the interaction is negatively regulated by amino acids.

The protein resides in the lysosome membrane. The catalysed reaction is S-ubiquitinyl-[E2 ubiquitin-conjugating enzyme]-L-cysteine + [acceptor protein]-L-lysine = [E2 ubiquitin-conjugating enzyme]-L-cysteine + N(6)-ubiquitinyl-[acceptor protein]-L-lysine.. The protein operates within protein modification; protein ubiquitination. Its activity is regulated as follows. The GATOR2 complex is negatively regulated by the upstream amino acid sensors CASTOR1 and SESN2, which sequester the GATOR2 complex in absence of amino acids. In the presence of abundant amino acids, GATOR2 is released from CASTOR1 and SESN2 and activated. In terms of biological role, catalytic component of the GATOR2 complex, a multiprotein complex that acts as an activator of the amino acid-sensing branch of the mTORC1 signaling pathway. The GATOR2 complex indirectly activates mTORC1 through the inhibition of the GATOR1 subcomplex. GATOR2 probably acts as an E3 ubiquitin-protein ligase toward GATOR1. In the presence of abundant amino acids, the GATOR2 complex mediates ubiquitination of the NPRL2 core component of the GATOR1 complex, leading to GATOR1 inactivation. In the absence of amino acids, GATOR2 is inhibited, activating the GATOR1 complex. In addition to its role in regulation of the mTORC1 complex, promotes the acidification of lysosomes and facilitates autophagic flux. Within the GATOR2 complex, WDR24 constitutes the catalytic subunit that mediates 'Lys-6'-linked ubiquitination of NPRL2. In Danio rerio (Zebrafish), this protein is GATOR2 complex protein WDR24.